A 491-amino-acid polypeptide reads, in one-letter code: Argininosuccinate lyase (491 aa).

This sequence belongs to the lyase 1 family. Argininosuccinate lyase subfamily.

It is found in the cytoplasm. It carries out the reaction 2-(N(omega)-L-arginino)succinate = fumarate + L-arginine. It functions in the pathway amino-acid biosynthesis; L-arginine biosynthesis; L-arginine from L-ornithine and carbamoyl phosphate: step 3/3. This is Argininosuccinate lyase from Methanosarcina acetivorans (strain ATCC 35395 / DSM 2834 / JCM 12185 / C2A).